Here is a 21-residue protein sequence, read N- to C-terminus: Agglutinin beta-1 chain (21 aa).

Residues 1–10 (NGPNGKSQSI) show a composition bias toward polar residues. The disordered stretch occupies residues 1–21 (NGPNGKSQSIIVGPWGDRVTN).

It belongs to the jacalin lectin family. In terms of assembly, formed of four alpha chains and four beta chains.

Its function is as follows. D-galactose-specific lectin, binds the T-antigen structure Gal-beta1,3-GalNAc. The chain is Agglutinin beta-1 chain from Maclura pomifera (Osage orange).